The primary structure comprises 901 residues: Probable inorganic carbon transporter subunit DabA (901 aa).

Cysteine 424, aspartate 426, histidine 606, and cysteine 621 together coordinate Zn(2+).

Belongs to the inorganic carbon transporter (TC 9.A.2) DabA family. Forms a complex with DabB. The cofactor is Zn(2+).

The protein resides in the cell membrane. Functionally, part of an energy-coupled inorganic carbon pump. The protein is Probable inorganic carbon transporter subunit DabA of Staphylococcus aureus (strain NCTC 8325 / PS 47).